A 317-amino-acid polypeptide reads, in one-letter code: MTARHFLLDTDLTSSEQAALLDLADQLKATRRDRKPARRPLEGRSVALIFEKPSTRTRLSFDVAVAELGGHPIVIDSGSSQLGRGETIEDTAAVLSRYVDAIVIRTFAQDRVDRMAAAATVPVINALSDHTHPCQALADLQTIREIRGRLAGVTLAYLGDGNNVAHSLLLAGALAGLRVHVASPPGYEPIEQVVRHANEIGAVTGGEALVTHDALEAAAGADVLYTDVWASMGQDTESDSRALVFQPYRLDEKVVEAASPDAIVMHCLPAHREMEISAAVLDGPRSVVFDQAENRLHAQKALLSFLLDETTAGVGSR.

Carbamoyl phosphate-binding positions include Ser-54–Thr-57, Gln-81, Arg-105, and His-132–Gln-135. L-ornithine contacts are provided by residues Asn-163, Asp-227, and Ser-231–Met-232. Residues Cys-267–Leu-268 and Arg-295 contribute to the carbamoyl phosphate site.

The protein belongs to the aspartate/ornithine carbamoyltransferase superfamily. OTCase family.

It is found in the cytoplasm. The catalysed reaction is carbamoyl phosphate + L-ornithine = L-citrulline + phosphate + H(+). The protein operates within amino-acid biosynthesis; L-arginine biosynthesis; L-arginine from L-ornithine and carbamoyl phosphate: step 1/3. Reversibly catalyzes the transfer of the carbamoyl group from carbamoyl phosphate (CP) to the N(epsilon) atom of ornithine (ORN) to produce L-citrulline. This chain is Ornithine carbamoyltransferase, found in Parafrankia sp. (strain EAN1pec).